A 1193-amino-acid polypeptide reads, in one-letter code: Magnesium-chelatase subunit H (1193 aa).

Belongs to the Mg-chelatase subunit H family.

The catalysed reaction is protoporphyrin IX + Mg(2+) + ATP + H2O = Mg-protoporphyrin IX + ADP + phosphate + 3 H(+). It functions in the pathway porphyrin-containing compound metabolism; bacteriochlorophyll biosynthesis (light-independent). Its function is as follows. Involved in bacteriochlorophyll pigment biosynthesis; introduces a magnesium ion into protoporphyrin IX to yield Mg-protoroporphyrin IX. This is Magnesium-chelatase subunit H (bchH) from Cereibacter sphaeroides (strain ATCC 17023 / DSM 158 / JCM 6121 / CCUG 31486 / LMG 2827 / NBRC 12203 / NCIMB 8253 / ATH 2.4.1.) (Rhodobacter sphaeroides).